Here is a 215-residue protein sequence, read N- to C-terminus: Ribonuclease T (215 aa).

In terms of domain architecture, Exonuclease spans 20–194; it reads VVIDVETAGF…YDTERTAVLF (175 aa). The Mg(2+) site is built by Asp23, Glu25, His181, and Asp186. Residue His181 is the Proton donor/acceptor of the active site.

Belongs to the RNase T family. In terms of assembly, homodimer. The cofactor is Mg(2+).

Its function is as follows. Trims short 3' overhangs of a variety of RNA species, leaving a one or two nucleotide 3' overhang. Responsible for the end-turnover of tRNA: specifically removes the terminal AMP residue from uncharged tRNA (tRNA-C-C-A). Also appears to be involved in tRNA biosynthesis. In Salmonella choleraesuis (strain SC-B67), this protein is Ribonuclease T.